The sequence spans 294 residues: Tyrosine-protein phosphatase (294 aa).

Positions 1-24 (MKTHHANLALALMLGLSSSATAVA) are cleaved as a signal peptide. The active-site Phosphocysteine intermediate is the Cys-182. Basic and acidic residues-rich tracts occupy residues 221–231 (QPKDSDERADH) and 238–247 (PGDRPQDGGH). Residues 221-252 (QPKDSDERADHGAGQAEPGDRPQDGGHGRYRA) form a disordered region.

Belongs to the protein-tyrosine phosphatase family. As to quaternary structure, monomer.

The enzyme catalyses O-phospho-L-tyrosyl-[protein] + H2O = L-tyrosyl-[protein] + phosphate. The sequence is that of Tyrosine-protein phosphatase (iphP) from Nostoc commune.